Consider the following 120-residue polypeptide: Meiosis expressed gene 1 protein homolog (120 aa).

The segment at 1 to 45 (MDGLAIGGVSAPMTAERPQQVKKQLSRRTPDAADGRKPTRMERAK) is disordered. Residues 28-45 (RTPDAADGRKPTRMERAK) are compositionally biased toward basic and acidic residues.

This sequence belongs to the MEIG1 family.

The sequence is that of Meiosis expressed gene 1 protein homolog from Oxyrrhis marina (Dinoflagellate).